The primary structure comprises 1754 residues: Probable outer membrane protein PmpB (1754 aa).

The signal sequence occupies residues 1-14 (MSSMKWLSATAVFA). Low complexity-rich tracts occupy residues 68–105 (NIPT…TPDP) and 212–232 (SETS…PSSS). Disordered regions lie at residues 68–109 (NIPT…KGGG), 190–235 (SSNS…SRAE), 252–271 (PAAQ…GSGG), 397–438 (NADA…ATAK), 621–668 (AAEN…STPS), and 1299–1332 (TSSA…ATTP). Composition is skewed to polar residues over residues 252–264 (PAAQ…STPS) and 402–412 (ASSSPQSGSGA). Low complexity-rich tracts occupy residues 413 to 427 (TTVS…GSDS), 636 to 668 (PTAD…STPS), 1299 to 1311 (TSSA…VSSS), and 1320 to 1332 (SAAA…ATTP). The Autotransporter domain maps to 1461–1754 (DDIAYNNFWV…MTSCGARMIF (294 aa)).

The protein belongs to the PMP outer membrane protein family.

It localises to the secreted. It is found in the cell wall. Its subcellular location is the cell outer membrane. The polypeptide is Probable outer membrane protein PmpB (pmpB) (Chlamydia trachomatis serovar D (strain ATCC VR-885 / DSM 19411 / UW-3/Cx)).